The sequence spans 53 residues: Large ribosomal subunit protein bL33 (53 aa).

This sequence belongs to the bacterial ribosomal protein bL33 family.

In Blochmanniella floridana, this protein is Large ribosomal subunit protein bL33.